Reading from the N-terminus, the 89-residue chain is MAKKSKIVKDQKQRELVLKYAKLRLELKKKADYAGLSQIPAKASPVRLKNRDSIDGRPRGYIRKFGISRINFRQLAHQGKLPGVRKTSW.

It belongs to the universal ribosomal protein uS14 family. In terms of assembly, part of the 30S ribosomal subunit. Contacts proteins S3 and S10.

Functionally, binds 16S rRNA, required for the assembly of 30S particles and may also be responsible for determining the conformation of the 16S rRNA at the A site. This is Small ribosomal subunit protein uS14 from Onion yellows phytoplasma (strain OY-M).